Consider the following 1024-residue polypeptide: Isoleucine--tRNA ligase (1024 aa).

The short motif at 52-62 is the 'HIGH' region element; it reads PTANGRPHVGH. Positions 590 to 594 match the 'KMSKS' region motif; it reads KMSKS. Lys593 serves as a coordination point for ATP.

This sequence belongs to the class-I aminoacyl-tRNA synthetase family. IleS type 2 subfamily. As to quaternary structure, monomer. The cofactor is Zn(2+).

Its subcellular location is the cytoplasm. It carries out the reaction tRNA(Ile) + L-isoleucine + ATP = L-isoleucyl-tRNA(Ile) + AMP + diphosphate. Its function is as follows. Catalyzes the attachment of isoleucine to tRNA(Ile). As IleRS can inadvertently accommodate and process structurally similar amino acids such as valine, to avoid such errors it has two additional distinct tRNA(Ile)-dependent editing activities. One activity is designated as 'pretransfer' editing and involves the hydrolysis of activated Val-AMP. The other activity is designated 'posttransfer' editing and involves deacylation of mischarged Val-tRNA(Ile). The sequence is that of Isoleucine--tRNA ligase from Picrophilus torridus (strain ATCC 700027 / DSM 9790 / JCM 10055 / NBRC 100828 / KAW 2/3).